The primary structure comprises 631 residues: MVRFVSILSLFGCAATLVTAHDDMDMDMDMDMDMDMNIDTTTSQSIDVSSTASIVPVPHEPKHLHGLPILQSPSLTPAERLYWENYNTTTYFTTQAGNRSALRYHIITLLLVAFVLYPVSLALSAARSRWYLPLLFVNLCICISSVMALSVFKNTFPEEDWYAHNIYGTTSVLLLVFMLVHFFAAVLSVPVSLASKKEYRPVDTIPLNDLESTPVMVNSARGSPSPSSNRDTLFSLSSDTTTATATNNNKRRRAEGEDEGDNTSNHDTLRDEDYDNDDDEIASIEAPPLLPQDIPVFRILFTNTKYQMLAAHLSCVANVVFHMLTYPLFMYIFVDLIIGFAVGNLLGKGIRIFNLLAHWIKGGVFFTLGVVSLARYCGFAAKYGWAWNNISFTSQLTQTRSSNLLFRFAPAGTFTMEFVESFLIFFYGSTNIFLEHLAGNGGAWTAKDLQHVSIAFMFIGTGLCGLLTEYKLNHWRFEHARKRPQTDVVAATPGYSPNPFPAFTIFWTGILMSQHAQSSQFSTTIHTQWGYLLSYGSFFRLLTFLILFLVPNTNSAASKPFTELITSFCLLCGGLVFMESTDQSIEAMEYRGFTPMFTFNLSVGFVSLLMAWEMILFIWKDWLIKTRKTSL.

Positions 1-20 (MVRFVSILSLFGCAATLVTA) are cleaved as a signal peptide. Residues 21–105 (HDDMDMDMDM…AGNRSALRYH (85 aa)) are Lumenal-facing. 2 N-linked (GlcNAc...) asparagine glycosylation sites follow: Asn-87 and Asn-98. Residues 106 to 126 (IITLLLVAFVLYPVSLALSAA) traverse the membrane as a helical segment. The Cytoplasmic portion of the chain corresponds to 127–131 (RSRWY). Residues 132–152 (LPLLFVNLCICISSVMALSVF) form a helical membrane-spanning segment. At 153-170 (KNTFPEEDWYAHNIYGTT) the chain is on the lumenal side. A helical transmembrane segment spans residues 171-191 (SVLLLVFMLVHFFAAVLSVPV). Residues 192 to 322 (SLASKKEYRP…LSCVANVVFH (131 aa)) are Cytoplasmic-facing. The tract at residues 216-274 (MVNSARGSPSPSSNRDTLFSLSSDTTTATATNNNKRRRAEGEDEGDNTSNHDTLRDEDY) is disordered. Ser-219 carries the post-translational modification Phosphoserine. Residues 220 to 239 (ARGSPSPSSNRDTLFSLSSD) are compositionally biased toward polar residues. Residue Lys-250 forms a Glycyl lysine isopeptide (Lys-Gly) (interchain with G-Cter in ubiquitin) linkage. The helical transmembrane segment at 323–343 (MLTYPLFMYIFVDLIIGFAVG) threads the bilayer. The Lumenal portion of the chain corresponds to 344–351 (NLLGKGIR). Residues 352 to 372 (IFNLLAHWIKGGVFFTLGVVS) form a helical membrane-spanning segment. Topologically, residues 373–407 (LARYCGFAAKYGWAWNNISFTSQLTQTRSSNLLFR) are cytoplasmic. Residues 408 to 428 (FAPAGTFTMEFVESFLIFFYG) traverse the membrane as a helical segment. Residues 429 to 451 (STNIFLEHLAGNGGAWTAKDLQH) are Lumenal-facing. The helical transmembrane segment at 452–472 (VSIAFMFIGTGLCGLLTEYKL) threads the bilayer. The Cytoplasmic segment spans residues 473–529 (NHWRFEHARKRPQTDVVAATPGYSPNPFPAFTIFWTGILMSQHAQSSQFSTTIHTQW). Residues 530 to 550 (GYLLSYGSFFRLLTFLILFLV) traverse the membrane as a helical segment. Over 551–598 (PNTNSAASKPFTELITSFCLLCGGLVFMESTDQSIEAMEYRGFTPMFT) the chain is Lumenal. A helical membrane pass occupies residues 599-619 (FNLSVGFVSLLMAWEMILFIW). Residues 620-631 (KDWLIKTRKTSL) are Cytoplasmic-facing.

The protein to S.pombe SpBC3B8.06.

It is found in the membrane. This is an uncharacterized protein from Saccharomyces cerevisiae (strain ATCC 204508 / S288c) (Baker's yeast).